A 95-amino-acid polypeptide reads, in one-letter code: Small ribosomal subunit protein uS14 (95 aa).

This sequence belongs to the universal ribosomal protein uS14 family. In terms of assembly, part of the 30S ribosomal subunit. Contacts proteins S3 and S10.

Functionally, binds 16S rRNA, required for the assembly of 30S particles and may also be responsible for determining the conformation of the 16S rRNA at the A site. This chain is Small ribosomal subunit protein uS14 (rpsN), found in Carsonella ruddii.